We begin with the raw amino-acid sequence, 228 residues long: 2,3-bisphosphoglycerate-dependent phosphoglycerate mutase (228 aa).

Residues 8-15 (RHGQSEWN), 21-22 (TG), arginine 60, 87-90 (ERHY), lysine 98, 114-115 (RR), and 183-184 (GN) each bind substrate. Residue histidine 9 is the Tele-phosphohistidine intermediate of the active site. Glutamate 87 acts as the Proton donor/acceptor in catalysis.

It belongs to the phosphoglycerate mutase family. BPG-dependent PGAM subfamily.

The catalysed reaction is (2R)-2-phosphoglycerate = (2R)-3-phosphoglycerate. It functions in the pathway carbohydrate degradation; glycolysis; pyruvate from D-glyceraldehyde 3-phosphate: step 3/5. Its function is as follows. Catalyzes the interconversion of 2-phosphoglycerate and 3-phosphoglycerate. This Staphylococcus haemolyticus (strain JCSC1435) protein is 2,3-bisphosphoglycerate-dependent phosphoglycerate mutase.